A 301-amino-acid polypeptide reads, in one-letter code: Pyridoxal 5'-phosphate synthase subunit Pdx1 (301 aa).

Position 26 (aspartate 26) interacts with D-ribose 5-phosphate. Lysine 83 acts as the Schiff-base intermediate with D-ribose 5-phosphate in catalysis. D-ribose 5-phosphate is bound at residue glycine 155. Arginine 167 is a binding site for D-glyceraldehyde 3-phosphate. D-ribose 5-phosphate-binding positions include glycine 216 and 237 to 238; that span reads GS.

Belongs to the PdxS/SNZ family. In terms of assembly, homohexamer and homododecamer. In the presence of Pdx2, forms a dodecamer of heterodimers.

The protein localises to the cytoplasm. The catalysed reaction is aldehydo-D-ribose 5-phosphate + D-glyceraldehyde 3-phosphate + L-glutamine = pyridoxal 5'-phosphate + L-glutamate + phosphate + 3 H2O + H(+). Its pathway is cofactor biosynthesis; pyridoxal 5'-phosphate biosynthesis. In terms of biological role, catalyzes the formation of pyridoxal 5'-phosphate from ribose 5-phosphate (RBP), glyceraldehyde 3-phosphate (G3P) and ammonia. The ammonia is provided by Pdx2. Can also use ribulose 5-phosphate and dihydroxyacetone phosphate as substrates, resulting from enzyme-catalyzed isomerization of RBP and G3P, respectively. The chain is Pyridoxal 5'-phosphate synthase subunit Pdx1 (pdx1) from Plasmodium falciparum (isolate 3D7).